We begin with the raw amino-acid sequence, 310 residues long: Malate dehydrogenase (310 aa).

Residues 7 to 12 and Asp-32 each bind NAD(+); that span reads GAGHVG. Substrate-binding residues include Arg-81 and Arg-87. NAD(+) contacts are provided by residues Asn-94 and 117–119; that span reads VSN. Residues Asn-119 and Arg-150 each coordinate substrate. His-174 (proton acceptor) is an active-site residue.

Belongs to the LDH/MDH superfamily. MDH type 3 family.

It carries out the reaction (S)-malate + NAD(+) = oxaloacetate + NADH + H(+). Catalyzes the reversible oxidation of malate to oxaloacetate. The sequence is that of Malate dehydrogenase from Chlorobium phaeobacteroides (strain BS1).